Reading from the N-terminus, the 408-residue chain is Arginine biosynthesis bifunctional protein ArgJ (408 aa).

Substrate contacts are provided by Thr156, Lys182, Thr193, Glu279, Asn403, and Ser408. Thr193 acts as the Nucleophile in catalysis.

Belongs to the ArgJ family. Heterotetramer of two alpha and two beta chains.

It localises to the cytoplasm. The enzyme catalyses N(2)-acetyl-L-ornithine + L-glutamate = N-acetyl-L-glutamate + L-ornithine. It catalyses the reaction L-glutamate + acetyl-CoA = N-acetyl-L-glutamate + CoA + H(+). It functions in the pathway amino-acid biosynthesis; L-arginine biosynthesis; L-ornithine and N-acetyl-L-glutamate from L-glutamate and N(2)-acetyl-L-ornithine (cyclic): step 1/1. It participates in amino-acid biosynthesis; L-arginine biosynthesis; N(2)-acetyl-L-ornithine from L-glutamate: step 1/4. Its function is as follows. Catalyzes two activities which are involved in the cyclic version of arginine biosynthesis: the synthesis of N-acetylglutamate from glutamate and acetyl-CoA as the acetyl donor, and of ornithine by transacetylation between N(2)-acetylornithine and glutamate. This chain is Arginine biosynthesis bifunctional protein ArgJ, found in Bordetella bronchiseptica (strain ATCC BAA-588 / NCTC 13252 / RB50) (Alcaligenes bronchisepticus).